Reading from the N-terminus, the 435-residue chain is Transcriptional enhancer factor TEF-5 (435 aa).

A compositionally biased stretch (polar residues) spans 1–12; the sequence is MASNSWNASSSP. The tract at residues 1 to 34 is disordered; sequence MASNSWNASSSPGEAREDGPEGLDKGLDNDAEGV. The residue at position 2 (A2) is an N-acetylalanine. Positions 14-28 are enriched in basic and acidic residues; sequence EAREDGPEGLDKGLD. The segment at residues 28-104 is a DNA-binding region (TEA); that stretch reads DNDAEGVWSP…QVLARKKVRE (77 aa). S148 is modified (phosphoserine). The tract at residues 173–435 is transcriptional activation; sequence GPSQDIKPFA…QHHVYKLVKD (263 aa).

Interacts with YAP1 and WWTR1/TAZ. In terms of tissue distribution, preferentially expressed in the placenta.

The protein localises to the nucleus. Functionally, transcription factor which plays a key role in the Hippo signaling pathway, a pathway involved in organ size control and tumor suppression by restricting proliferation and promoting apoptosis. The core of this pathway is composed of a kinase cascade wherein MST1/MST2, in complex with its regulatory protein SAV1, phosphorylates and activates LATS1/2 in complex with its regulatory protein MOB1, which in turn phosphorylates and inactivates YAP1 oncoprotein and WWTR1/TAZ. Acts by mediating gene expression of YAP1 and WWTR1/TAZ, thereby regulating cell proliferation, migration and epithelial mesenchymal transition (EMT) induction. Binds to multiple functional elements of the human chorionic somatomammotropin-B gene enhancer. This is Transcriptional enhancer factor TEF-5 (TEAD3) from Homo sapiens (Human).